A 183-amino-acid chain; its full sequence is MKIMEPEIKIVNVVVSTKIGDNIDLEEVAMILENAEYEPEQFPGLVCRLSVPKVALLIFRSGKVNCTGAKSKEEAEIAIKKIIKELKDAGIDVIENPEIKIQNMVATADLGIEPNLDDIALMVEGTEYEPEQFPGLVYRLDDPKVVVLIFGSGKVVITGLKSEEDAKRALKKILDTIKEVQEL.

Repeat copies occupy residues 10-86 (IVNV…IKEL) and 101-177 (IQNM…LDTI).

It belongs to the TBP family.

In terms of biological role, general factor that plays a role in the activation of archaeal genes transcribed by RNA polymerase. Binds specifically to the TATA box promoter element which lies close to the position of transcription initiation. The sequence is that of TATA-box-binding protein (tbp) from Methanocaldococcus jannaschii (strain ATCC 43067 / DSM 2661 / JAL-1 / JCM 10045 / NBRC 100440) (Methanococcus jannaschii).